The chain runs to 20 residues: Cathepsin L1 (20 aa).

A compositionally biased stretch (basic and acidic residues) spans 1 to 10 (AVPDKIDPRE). The interval 1–20 (AVPDKIDPRESGYVTGVKDQ) is disordered.

It belongs to the peptidase C1 family. As to quaternary structure, dimer of a heavy and a light chain linked by disulfide bonds.

It is found in the lysosome. It carries out the reaction Specificity close to that of papain. As compared to cathepsin B, cathepsin L exhibits higher activity toward protein substrates, but has little activity on Z-Arg-Arg-NHMec, and no peptidyl-dipeptidase activity.. Functionally, thiol protease that assists the parasite in burrowing through the gut wall and liver of its mammalian host. In Fasciola hepatica (Liver fluke), this protein is Cathepsin L1.